The sequence spans 385 residues: Chaperone protein DnaJ (385 aa).

Residues 5–70 form the J domain; that stretch reads DYYEVLGVAK…QKRAAYDRYG (66 aa). The segment at 145 to 223 adopts a CR-type zinc-finger fold; it reads GFDTEIRVPS…CDGVGRTRRN (79 aa). Zn(2+) is bound by residues Cys158, Cys161, Cys175, Cys178, Cys197, Cys200, Cys211, and Cys214. CXXCXGXG motif repeat units follow at residues 158-165, 175-182, 197-204, and 211-218; these read CDTCHGSG, CRTCGGSG, CPTCHGTG, and CPSCDGVG.

Belongs to the DnaJ family. Homodimer. Requires Zn(2+) as cofactor.

The protein resides in the cytoplasm. Functionally, participates actively in the response to hyperosmotic and heat shock by preventing the aggregation of stress-denatured proteins and by disaggregating proteins, also in an autonomous, DnaK-independent fashion. Unfolded proteins bind initially to DnaJ; upon interaction with the DnaJ-bound protein, DnaK hydrolyzes its bound ATP, resulting in the formation of a stable complex. GrpE releases ADP from DnaK; ATP binding to DnaK triggers the release of the substrate protein, thus completing the reaction cycle. Several rounds of ATP-dependent interactions between DnaJ, DnaK and GrpE are required for fully efficient folding. Also involved, together with DnaK and GrpE, in the DNA replication of plasmids through activation of initiation proteins. The polypeptide is Chaperone protein DnaJ (Bordetella pertussis (strain Tohama I / ATCC BAA-589 / NCTC 13251)).